A 777-amino-acid chain; its full sequence is Santalene and bergamotene synthase, chloroplastic (777 aa).

The transit peptide at M1–R36 directs the protein to the chloroplast. D530 and D534 together coordinate Mg(2+). The short motif at D530–D534 is the DDXXD motif element.

This sequence belongs to the terpene synthase family. Tpse subfamily. Mg(2+) serves as cofactor. Requires Mn(2+) as cofactor.

The protein localises to the plastid. Its subcellular location is the chloroplast. The catalysed reaction is (2Z,6Z)-farnesyl diphosphate = (+)-alpha-santalene + diphosphate. It carries out the reaction (2Z,6Z)-farnesyl diphosphate = (+)-endo-beta-bergamotene + diphosphate. The enzyme catalyses (2Z,6Z)-farnesyl diphosphate = (1S,5S,6S)-alpha-bergamotene + diphosphate. In terms of biological role, (2Z,6Z)-farnesyl diphosphate cyclizing enzyme. Produces (+)-alpha-santalene, (+)-endo-beta-bergamotene, (-)-endo-alpha-bergamotene, and at lower amounts, (-)exo-alpha-bergamotene and (+)-epi-beta-santalene. Not able to use geranyl diphosphate, E,E-farnesyl diphosphate or E,E,E-geranylgeranyl diphosphate as substrates, but able to use Neryl diphosphate to make the monoterpene terpineol. The protein is Santalene and bergamotene synthase, chloroplastic (SBS) of Solanum habrochaites (Wild tomato).